A 189-amino-acid polypeptide reads, in one-letter code: Inosine triphosphate pyrophosphatase (189 aa).

Thr8–Lys13 is an ITP binding site. Glu39 contacts Mg(2+). ITP-binding positions include Lys51, Asp67–Thr68, Lys84, Phe143–Asp146, Lys167, and His172–Arg173.

This sequence belongs to the HAM1 NTPase family. Homodimer. Mg(2+) is required as a cofactor. It depends on Mn(2+) as a cofactor.

It is found in the cytoplasm. Its subcellular location is the nucleus. The enzyme catalyses ITP + H2O = IMP + diphosphate + H(+). It carries out the reaction dITP + H2O = dIMP + diphosphate + H(+). The catalysed reaction is XTP + H2O = XMP + diphosphate + H(+). Pyrophosphatase that hydrolyzes non-canonical purine nucleotides such as inosine triphosphate (ITP), deoxyinosine triphosphate (dITP) or xanthosine 5'-triphosphate (XTP) to their respective monophosphate derivatives. The enzyme does not distinguish between the deoxy- and ribose forms. Probably excludes non-canonical purines from RNA and DNA precursor pools, thus preventing their incorporation into RNA and DNA and avoiding chromosomal lesions. This Cryptococcus neoformans var. neoformans serotype D (strain JEC21 / ATCC MYA-565) (Filobasidiella neoformans) protein is Inosine triphosphate pyrophosphatase.